The chain runs to 31 residues: Cytochrome b6-f complex subunit 6 (31 aa).

A helical membrane pass occupies residues 4–26; that stretch reads ITSYFGFLLAASTITSALLIGLS.

This sequence belongs to the PetL family. In terms of assembly, the 4 large subunits of the cytochrome b6-f complex are cytochrome b6, subunit IV (17 kDa polypeptide, PetD), cytochrome f and the Rieske protein, while the 4 small subunits are PetG, PetL, PetM and PetN. The complex functions as a dimer.

It localises to the plastid. The protein localises to the chloroplast thylakoid membrane. Component of the cytochrome b6-f complex, which mediates electron transfer between photosystem II (PSII) and photosystem I (PSI), cyclic electron flow around PSI, and state transitions. PetL is important for photoautotrophic growth as well as for electron transfer efficiency and stability of the cytochrome b6-f complex. The polypeptide is Cytochrome b6-f complex subunit 6 (Chloranthus spicatus (Chulantree)).